The primary structure comprises 317 residues: Acetyl-coenzyme A carboxylase carboxyl transferase subunit alpha (317 aa).

Residues 40-293 (LEGRVRDAMV…ETVIGDALKE (254 aa)) form the CoA carboxyltransferase C-terminal domain.

It belongs to the AccA family. Acetyl-CoA carboxylase is a heterohexamer composed of biotin carboxyl carrier protein (AccB), biotin carboxylase (AccC) and two subunits each of ACCase subunit alpha (AccA) and ACCase subunit beta (AccD).

It is found in the cytoplasm. It catalyses the reaction N(6)-carboxybiotinyl-L-lysyl-[protein] + acetyl-CoA = N(6)-biotinyl-L-lysyl-[protein] + malonyl-CoA. Its pathway is lipid metabolism; malonyl-CoA biosynthesis; malonyl-CoA from acetyl-CoA: step 1/1. Functionally, component of the acetyl coenzyme A carboxylase (ACC) complex. First, biotin carboxylase catalyzes the carboxylation of biotin on its carrier protein (BCCP) and then the CO(2) group is transferred by the carboxyltransferase to acetyl-CoA to form malonyl-CoA. The sequence is that of Acetyl-coenzyme A carboxylase carboxyl transferase subunit alpha from Rhizobium meliloti (strain 1021) (Ensifer meliloti).